The sequence spans 217 residues: Probable transaldolase (217 aa).

Residue Lys-83 is the Schiff-base intermediate with substrate of the active site.

It belongs to the transaldolase family. Type 3B subfamily.

The protein localises to the cytoplasm. It carries out the reaction D-sedoheptulose 7-phosphate + D-glyceraldehyde 3-phosphate = D-erythrose 4-phosphate + beta-D-fructose 6-phosphate. The protein operates within carbohydrate degradation; pentose phosphate pathway; D-glyceraldehyde 3-phosphate and beta-D-fructose 6-phosphate from D-ribose 5-phosphate and D-xylulose 5-phosphate (non-oxidative stage): step 2/3. Its function is as follows. Transaldolase is important for the balance of metabolites in the pentose-phosphate pathway. This is Probable transaldolase from Bartonella bacilliformis (strain ATCC 35685 / KC583 / Herrer 020/F12,63).